Here is a 275-residue protein sequence, read N- to C-terminus: Putative carbamate hydrolase RutD (275 aa).

It belongs to the AB hydrolase superfamily. Hydrolase RutD family.

It catalyses the reaction carbamate + 2 H(+) = NH4(+) + CO2. In terms of biological role, involved in pyrimidine catabolism. May facilitate the hydrolysis of carbamate, a reaction that can also occur spontaneously. The chain is Putative carbamate hydrolase RutD from Escherichia coli O6:H1 (strain CFT073 / ATCC 700928 / UPEC).